The following is a 562-amino-acid chain: Dihydroxy-acid dehydratase (562 aa).

Cysteine 51 provides a ligand contact to [2Fe-2S] cluster. Aspartate 83 is a Mg(2+) binding site. Cysteine 124 lines the [2Fe-2S] cluster pocket. Positions 125 and 126 each coordinate Mg(2+). An N6-carboxylysine modification is found at lysine 126. Cysteine 196 provides a ligand contact to [2Fe-2S] cluster. A Mg(2+)-binding site is contributed by glutamate 448. The active-site Proton acceptor is serine 474.

Belongs to the IlvD/Edd family. Homodimer. [2Fe-2S] cluster is required as a cofactor. The cofactor is Mg(2+).

It carries out the reaction (2R)-2,3-dihydroxy-3-methylbutanoate = 3-methyl-2-oxobutanoate + H2O. The catalysed reaction is (2R,3R)-2,3-dihydroxy-3-methylpentanoate = (S)-3-methyl-2-oxopentanoate + H2O. It participates in amino-acid biosynthesis; L-isoleucine biosynthesis; L-isoleucine from 2-oxobutanoate: step 3/4. The protein operates within amino-acid biosynthesis; L-valine biosynthesis; L-valine from pyruvate: step 3/4. Its function is as follows. Functions in the biosynthesis of branched-chain amino acids. Catalyzes the dehydration of (2R,3R)-2,3-dihydroxy-3-methylpentanoate (2,3-dihydroxy-3-methylvalerate) into 2-oxo-3-methylpentanoate (2-oxo-3-methylvalerate) and of (2R)-2,3-dihydroxy-3-methylbutanoate (2,3-dihydroxyisovalerate) into 2-oxo-3-methylbutanoate (2-oxoisovalerate), the penultimate precursor to L-isoleucine and L-valine, respectively. This is Dihydroxy-acid dehydratase from Pyrobaculum aerophilum (strain ATCC 51768 / DSM 7523 / JCM 9630 / CIP 104966 / NBRC 100827 / IM2).